Consider the following 129-residue polypeptide: Small ribosomal subunit protein uS8 (129 aa).

This sequence belongs to the universal ribosomal protein uS8 family. As to quaternary structure, part of the 30S ribosomal subunit.

Functionally, one of the primary rRNA binding proteins, it binds directly to 16S rRNA central domain where it helps coordinate assembly of the platform of the 30S subunit. In Thermoplasma acidophilum (strain ATCC 25905 / DSM 1728 / JCM 9062 / NBRC 15155 / AMRC-C165), this protein is Small ribosomal subunit protein uS8.